A 407-amino-acid chain; its full sequence is uncharacterized protein (407 aa).

Transmembrane regions (helical) follow at residues 22 to 42 (IVSV…PLAV), 51 to 71 (LGFS…ATLA), 101 to 121 (ALLL…GLLV), 126 to 146 (VLGI…IGRV), 154 to 174 (VISW…PVGV), 179 to 199 (ALIP…GYYL), 227 to 247 (GLGL…ITLY), 258 to 278 (LSLT…ANTI), 286 to 306 (VAIV…LAPV), 309 to 329 (VALV…PALG), 347 to 367 (AYSV…GYVA), and 369 to 389 (AFGY…GVAL).

This sequence belongs to the major facilitator superfamily. YhhS family.

It is found in the cell inner membrane. This is an uncharacterized protein from Burkholderia mallei (strain NCTC 10229).